The primary structure comprises 101 residues: Defensin-like protein 222 (101 aa).

A signal peptide spans 1–21; it reads MRTIVLFSTLMILVLSCMSNA. 3 disulfide bridges follow: cysteine 68–cysteine 85, cysteine 71–cysteine 90, and cysteine 75–cysteine 92.

The protein belongs to the DEFL family.

Its subcellular location is the secreted. The protein is Defensin-like protein 222 of Arabidopsis thaliana (Mouse-ear cress).